Reading from the N-terminus, the 386-residue chain is Bifunctional enzyme IspD/IspF (386 aa).

A 2-C-methyl-D-erythritol 4-phosphate cytidylyltransferase region spans residues 1–230 (MNSVPSLPGQ…LEEQSMSVIP (230 aa)). The segment at 231 to 386 (RTGMGFDVHR…AQAVATVVSG (156 aa)) is 2-C-methyl-D-erythritol 2,4-cyclodiphosphate synthase. D237 and H239 together coordinate a divalent metal cation. 4-CDP-2-C-methyl-D-erythritol 2-phosphate contacts are provided by residues 237–239 (DVH) and 263–264 (HS). A divalent metal cation is bound at residue H271. Residues 285-287 (DIG), 361-364 (TTTE), and R371 each bind 4-CDP-2-C-methyl-D-erythritol 2-phosphate.

The protein in the N-terminal section; belongs to the IspD/TarI cytidylyltransferase family. IspD subfamily. In the C-terminal section; belongs to the IspF family. The cofactor is a divalent metal cation.

The catalysed reaction is 2-C-methyl-D-erythritol 4-phosphate + CTP + H(+) = 4-CDP-2-C-methyl-D-erythritol + diphosphate. The enzyme catalyses 4-CDP-2-C-methyl-D-erythritol 2-phosphate = 2-C-methyl-D-erythritol 2,4-cyclic diphosphate + CMP. It participates in isoprenoid biosynthesis; isopentenyl diphosphate biosynthesis via DXP pathway; isopentenyl diphosphate from 1-deoxy-D-xylulose 5-phosphate: step 2/6. The protein operates within isoprenoid biosynthesis; isopentenyl diphosphate biosynthesis via DXP pathway; isopentenyl diphosphate from 1-deoxy-D-xylulose 5-phosphate: step 4/6. Functionally, bifunctional enzyme that catalyzes the formation of 4-diphosphocytidyl-2-C-methyl-D-erythritol from CTP and 2-C-methyl-D-erythritol 4-phosphate (MEP) (IspD), and catalyzes the conversion of 4-diphosphocytidyl-2-C-methyl-D-erythritol 2-phosphate (CDP-ME2P) to 2-C-methyl-D-erythritol 2,4-cyclodiphosphate (ME-CPP) with a corresponding release of cytidine 5-monophosphate (CMP) (IspF). In Novosphingobium aromaticivorans (strain ATCC 700278 / DSM 12444 / CCUG 56034 / CIP 105152 / NBRC 16084 / F199), this protein is Bifunctional enzyme IspD/IspF.